An 861-amino-acid polypeptide reads, in one-letter code: Seed linoleate 9S-lipoxygenase-3 (861 aa).

Residues 41–166 (QGFDILGSTV…HHKIDRIFFA (126 aa)) form the PLAT domain. The region spanning 169–861 (TYLPSETPAP…FRGIPNSISI (693 aa)) is the Lipoxygenase domain. A disordered region spans residues 215-257 (NPDSGENHARPVLGGSETYPYPRRGRTGRKPTRKDPNSESRSD). Residues 237–246 (RRGRTGRKPT) show a composition bias toward basic residues. Basic and acidic residues predominate over residues 247–257 (RKDPNSESRSD). The Fe cation site is built by His522, His527, His713, Asn717, and Ile861.

It belongs to the lipoxygenase family. Requires Fe cation as cofactor.

It localises to the cytoplasm. It carries out the reaction (9Z,12Z)-octadecadienoate + O2 = (9S)-hydroperoxy-(10E,12Z)-octadecadienoate. The protein operates within lipid metabolism; oxylipin biosynthesis. Functionally, plant lipoxygenase may be involved in a number of diverse aspects of plant physiology including growth and development, pest resistance, and senescence or responses to wounding. It catalyzes the hydroperoxidation of lipids containing a cis,cis-1,4-pentadiene structure. In Pisum sativum (Garden pea), this protein is Seed linoleate 9S-lipoxygenase-3 (LOX1.3).